We begin with the raw amino-acid sequence, 863 residues long: Chloride channel protein A (863 aa).

The Cytoplasmic segment spans residues Met-1–Thr-124. Positions Glu-48 to Arg-78 are disordered. Residues Asn-49–Gly-71 are compositionally biased toward low complexity. A run of 7 helical transmembrane segments spans residues Phe-125 to Val-145, Ile-171 to Ile-191, Leu-228 to Ile-248, Gly-289 to Phe-309, Thr-324 to Met-344, Leu-367 to Leu-387, and Val-408 to Phe-428. The segment at Lys-434–Ser-460 is disordered. Residues Gly-439–Ser-460 are compositionally biased toward low complexity. 3 helical membrane-spanning segments follow: residues Ile-518 to Thr-538, Ser-539 to Gly-559, and Leu-561 to Gly-581. 2 consecutive CBS domains span residues Met-661–Gln-742 and Met-816–Leu-863.

It belongs to the chloride channel (TC 2.A.49) family.

It localises to the membrane. Voltage-gated chloride channel. Chloride channels may have several functions including the regulation of cell volume, membrane potential stabilization and signal transduction. This is Chloride channel protein A (clcA) from Dictyostelium discoideum (Social amoeba).